A 495-amino-acid chain; its full sequence is L-arabinose isomerase (495 aa).

Mn(2+)-binding residues include glutamate 305, glutamate 332, histidine 349, and histidine 448.

It belongs to the arabinose isomerase family. Requires Mn(2+) as cofactor.

The enzyme catalyses beta-L-arabinopyranose = L-ribulose. It participates in carbohydrate degradation; L-arabinose degradation via L-ribulose; D-xylulose 5-phosphate from L-arabinose (bacterial route): step 1/3. In terms of biological role, catalyzes the conversion of L-arabinose to L-ribulose. The sequence is that of L-arabinose isomerase from Mannheimia succiniciproducens (strain KCTC 0769BP / MBEL55E).